The sequence spans 324 residues: Glyoxylate/hydroxypyruvate reductase B (324 aa).

Catalysis depends on residues arginine 237 and glutamate 266. Histidine 285 (proton donor) is an active-site residue.

This sequence belongs to the D-isomer specific 2-hydroxyacid dehydrogenase family. GhrB subfamily. As to quaternary structure, homodimer.

It localises to the cytoplasm. It catalyses the reaction glycolate + NADP(+) = glyoxylate + NADPH + H(+). The enzyme catalyses (R)-glycerate + NAD(+) = 3-hydroxypyruvate + NADH + H(+). The catalysed reaction is (R)-glycerate + NADP(+) = 3-hydroxypyruvate + NADPH + H(+). In terms of biological role, catalyzes the NADPH-dependent reduction of glyoxylate and hydroxypyruvate into glycolate and glycerate, respectively. This chain is Glyoxylate/hydroxypyruvate reductase B, found in Shigella flexneri serotype 5b (strain 8401).